A 210-amino-acid chain; its full sequence is CLAVATA3/ESR (CLE)-related protein 4A-3 (210 aa).

An N-terminal signal peptide occupies residues methionine 1–alanine 21. Residues alanine 21–methionine 83 form a required for secretion from the host cytoplasm to the host apoplasm region. Asparagine 32 carries an N-linked (GlcNAc...) asparagine glycan. Residues arginine 116–histidine 210 form a disordered region. Composition is skewed to basic and acidic residues over residues histidine 125–valine 137 and proline 144–glycine 200. One copy of the A-1 repeat lies at glutamate 127–lysine 135. The tract at residues glutamate 127–lysine 198 is 4 X approximate repeat A. The CLE-1 repeat unit spans residues arginine 136–histidine 147. A 4 X approximate repeat CLE region spans residues arginine 136 to histidine 210. The A-2 repeat unit spans residues glutamine 148 to lysine 156. Residues arginine 157–histidine 168 form a CLE-2 repeat. One copy of the A-3 repeat lies at glutamate 169–lysine 177. A CLE-3 repeat occupies arginine 178–histidine 189. An A-4 repeat occupies glutamate 190–lysine 198. One copy of the CLE-4 repeat lies at arginine 199–histidine 210.

This sequence belongs to the CLV3/ESR signal peptide family. Highly expressed exclusively within the dorsal esophageal gland cell during syncytium formation in host plants.

It localises to the secreted. The protein resides in the host cytoplasm. The protein localises to the host extracellular space. It is found in the extracellular space. Its subcellular location is the apoplast. Its function is as follows. Mimics host plant CLE extracellular signal peptides that regulate cell fate. May play a role in the differentiation or division of feeding cells (syncytia) induced in plant roots during infection. The sequence is that of CLAVATA3/ESR (CLE)-related protein 4A-3 (CLE-4A-3) from Globodera rostochiensis (Golden nematode worm).